The primary structure comprises 247 residues: 5'-nucleotidase SurE (247 aa).

A divalent metal cation contacts are provided by Asp-8, Asp-9, Ser-39, and Asn-91.

It belongs to the SurE nucleotidase family. It depends on a divalent metal cation as a cofactor.

It is found in the cytoplasm. It carries out the reaction a ribonucleoside 5'-phosphate + H2O = a ribonucleoside + phosphate. Its function is as follows. Nucleotidase that shows phosphatase activity on nucleoside 5'-monophosphates. This is 5'-nucleotidase SurE from Chromobacterium violaceum (strain ATCC 12472 / DSM 30191 / JCM 1249 / CCUG 213 / NBRC 12614 / NCIMB 9131 / NCTC 9757 / MK).